The primary structure comprises 550 residues: Epidermal growth factor-like protein 6 (550 aa).

An N-terminal signal peptide occupies residues 1–18 (MQPPWGLALPLLLPWVTG). The EGF-like 1 domain occupies 55-90 (NKGVCEAMCEPRCKFGECVGPNKCRCFPGYTGKTCT). Disulfide bonds link C59/C72, C63/C78, C80/C89, C96/C107, C103/C116, and C118/C130. The EGF-like 2; calcium-binding domain maps to 92-131 (DVNECGVKPRPCQHRCVNTHGSYKCFCLSGHMLLPDATCS). Residues 135–171 (TCARLNCQYGCEDTEEGPRCVCPSSGLRLGPNGRVCL) form the EGF-like 3 domain. Residues 172-210 (DIDECASSKAVCPSNRRCVNTFGSYYCKCHIGFELKYIG) enclose the EGF-like 4; calcium-binding domain. 5 disulfides stabilise this stretch: C176/C189, C183/C198, C221/C234, C228/C243, and C245/C256. Positions 217–257 (DINECALNTHPCSPHANCLNTRGSFKCKCKQGYRGNGLQCS) constitute an EGF-like 5; calcium-binding domain. Positions 295–354 (KMVTPRPASTRVPKVNLPYSSEEGVSRGRNYDGEQKKKEEGKRERLEEEKGEKTLRNEVE) are disordered. Basic and acidic residues predominate over residues 318–354 (GVSRGRNYDGEQKKKEEGKRERLEEEKGEKTLRNEVE). Residues 327–357 (GEQKKKEEGKRERLEEEKGEKTLRNEVEQER) adopt a coiled-coil conformation. N-linked (GlcNAc...) asparagine glycosylation is present at N394. One can recognise an MAM domain in the interval 397 to 543 (VDCSFDLGVC…VLLVSGLCPD (147 aa)).

It belongs to the nephronectin family. Expressed at basement membrane of pelage follicles (at protein level).

The protein localises to the secreted. It is found in the extracellular space. The protein resides in the extracellular matrix. Its subcellular location is the basement membrane. Its function is as follows. May bind integrin alpha-8/beta-1 and play a role in hair follicle morphogenesis. Promotes matrix assembly. The chain is Epidermal growth factor-like protein 6 (Egfl6) from Mus musculus (Mouse).